The primary structure comprises 154 residues: Endoribonuclease YbeY (154 aa).

Positions 113, 117, and 123 each coordinate Zn(2+).

The protein belongs to the endoribonuclease YbeY family. The cofactor is Zn(2+).

The protein resides in the cytoplasm. Functionally, single strand-specific metallo-endoribonuclease involved in late-stage 70S ribosome quality control and in maturation of the 3' terminus of the 16S rRNA. The protein is Endoribonuclease YbeY of Ehrlichia canis (strain Jake).